Reading from the N-terminus, the 140-residue chain is Natriuretic peptides A (140 aa).

A signal peptide spans 1–24; sequence MDTRGSFSCGFLLLLLIQLQPSRA. A propeptide spanning residues 25–111 is cleaved from the precursor; sequence NPIYNLSPAK…KRLRGVQMPR (87 aa). A disordered region spans residues 55–94; it reads ALESNPDLQEPQTQEEIPPELTDDSDEQKAEPKLASNTPL. The segment covering 71 to 80 has biased composition (acidic residues); the sequence is IPPELTDDSD. Residues cysteine 118 and cysteine 134 are joined by a disulfide bond.

Belongs to the natriuretic peptide family. Post-translationally, cleaved by CORIN upon secretion to produce the functional hormone.

The protein resides in the secreted. Its function is as follows. Hormone playing a key role in cardiovascular homeostasis through regulation of natriuresis, diuresis, and vasodilation. Specifically binds and stimulates the cGMP production of the NPR1 receptor. Binds the clearance receptor NPR3. This is Natriuretic peptides A (NPPA) from Gallus gallus (Chicken).